A 436-amino-acid chain; its full sequence is GTPase Der (436 aa).

EngA-type G domains lie at P4–S167 and I175–N351. Residues G10–S17, D57–I61, N119–D122, G181–S188, D229–M233, and N294–D297 contribute to the GTP site. The region spanning L352 to K436 is the KH-like domain.

The protein belongs to the TRAFAC class TrmE-Era-EngA-EngB-Septin-like GTPase superfamily. EngA (Der) GTPase family. Associates with the 50S ribosomal subunit.

In terms of biological role, GTPase that plays an essential role in the late steps of ribosome biogenesis. This chain is GTPase Der, found in Enterococcus faecalis (strain ATCC 700802 / V583).